Reading from the N-terminus, the 351-residue chain is MTALTPAPCDLVVADLGGTTLRVGRITAGTSEVHDVKRVPTNGLGRYGALAPQELQDRVMEQLTREIAAHLNRPGQAPAQAVAVSFAGPMTADGVVLAGPTLWGGPAAPLPVADVLTQQLGLPVVAANDVTAAAWRYAAAEPEPFCLTTVSSGIGNKVFRHGEIVIDQLGYGGEIGHWLVDHAEDAAPCECGGRGHLGAIASGRGALFAVRAAAAADASAFARSALAGPSGGVPEAITNEAFAAAARAGDTFARESLRRSLRPLASAVSLLFTAIGVRRYLFVGGFALALGDTFLTLLGDELVRVGCFGLDEYATRAMLALGEDDDDHCLIGIGQLAAARLGAPRAVEVTA.

The protein belongs to the ROK (NagC/XylR) family.

The catalysed reaction is valienone + ATP = valienone 7-phosphate + ADP + H(+). It catalyses the reaction validone + ATP = validone 7-phosphate + ADP + H(+). In terms of biological role, involved in the biosynthesis of the antifungal agent validamycin A. Catalyzes the phosphorylation of valienone and validone to their 7-phosphate derivatives. The chain is C(7)-cyclitol 7-kinase from Streptomyces hygroscopicus subsp. limoneus.